We begin with the raw amino-acid sequence, 374 residues long: CMP-N-acetylneuraminate-beta-1,4-galactoside alpha-2,3-sialyltransferase (374 aa).

At 1–8 (MGLLVFVR) the chain is on the cytoplasmic side. A helical; Signal-anchor for type II membrane protein transmembrane segment spans residues 9–28 (NLLLALCLFLVLGFLYYSAW). Residues 29–374 (KLHLLQWEDS…RVITDLSSGI (346 aa)) are Lumenal-facing. 2 N-linked (GlcNAc...) asparagine glycosylation sites follow: N79 and N170. C159 and C313 form a disulfide bridge.

This sequence belongs to the glycosyltransferase 29 family. The soluble form derives from the membrane form by proteolytic processing. In terms of tissue distribution, found in all tissues tested. High expression found in brain, liver, kidney, colon, heart and lung.

Its subcellular location is the golgi apparatus. It localises to the golgi stack membrane. The protein localises to the secreted. It catalyses the reaction a beta-D-galactosyl-(1-&gt;4)-N-acetyl-beta-D-glucosaminyl derivative + CMP-N-acetyl-beta-neuraminate = an N-acetyl-alpha-neuraminyl-(2-&gt;3)-beta-D-galactosyl-(1-&gt;4)-N-acetyl-beta-D-glucosaminyl derivative + CMP + H(+). The protein operates within protein modification; protein glycosylation. Catalyzes the formation of the NeuAc-alpha-2,3-Gal-beta-1,4-GlcNAc-, NeuAc-alpha-2,3-Gal-beta-1,3-GlcNAc- and NeuAc-alpha-2,3-Gal-beta-1,3-GalNAc- sequences found in terminal carbohydrate groups of glycoproteins and glycolipids. The highest activity is toward Gal-beta-1,3-GlcNAc and the lowest toward Gal-beta-1,3-GalNAc. This is CMP-N-acetylneuraminate-beta-1,4-galactoside alpha-2,3-sialyltransferase (St3gal3) from Rattus norvegicus (Rat).